Here is a 360-residue protein sequence, read N- to C-terminus: Phosphoserine aminotransferase (360 aa).

Arg-41 serves as a coordination point for L-glutamate. Residues Trp-101, Thr-152, Asp-172, and Gln-195 each contribute to the pyridoxal 5'-phosphate site. An N6-(pyridoxal phosphate)lysine modification is found at Lys-196. 237-238 (NT) serves as a coordination point for pyridoxal 5'-phosphate.

The protein belongs to the class-V pyridoxal-phosphate-dependent aminotransferase family. SerC subfamily. As to quaternary structure, homodimer. Pyridoxal 5'-phosphate serves as cofactor.

The protein resides in the cytoplasm. The catalysed reaction is O-phospho-L-serine + 2-oxoglutarate = 3-phosphooxypyruvate + L-glutamate. It carries out the reaction 4-(phosphooxy)-L-threonine + 2-oxoglutarate = (R)-3-hydroxy-2-oxo-4-phosphooxybutanoate + L-glutamate. It participates in amino-acid biosynthesis; L-serine biosynthesis; L-serine from 3-phospho-D-glycerate: step 2/3. Its pathway is cofactor biosynthesis; pyridoxine 5'-phosphate biosynthesis; pyridoxine 5'-phosphate from D-erythrose 4-phosphate: step 3/5. In terms of biological role, catalyzes the reversible conversion of 3-phosphohydroxypyruvate to phosphoserine and of 3-hydroxy-2-oxo-4-phosphonooxybutanoate to phosphohydroxythreonine. The sequence is that of Phosphoserine aminotransferase from Burkholderia cenocepacia (strain HI2424).